The sequence spans 106 residues: Iron-sulfur cluster assembly protein CyaY (106 aa).

It belongs to the frataxin family.

Involved in iron-sulfur (Fe-S) cluster assembly. May act as a regulator of Fe-S biogenesis. This is Iron-sulfur cluster assembly protein CyaY from Pectobacterium atrosepticum (strain SCRI 1043 / ATCC BAA-672) (Erwinia carotovora subsp. atroseptica).